The chain runs to 183 residues: A-type ATP synthase subunit E (183 aa).

This sequence belongs to the V-ATPase E subunit family. In terms of assembly, has multiple subunits with at least A(3), B(3), C, D, E, F, H, I and proteolipid K(x).

The protein localises to the cell membrane. Functionally, component of the A-type ATP synthase that produces ATP from ADP in the presence of a proton gradient across the membrane. The sequence is that of A-type ATP synthase subunit E from Methanococcoides burtonii (strain DSM 6242 / NBRC 107633 / OCM 468 / ACE-M).